The primary structure comprises 263 residues: Chaperone protein ClpE (263 aa).

A signal peptide spans 1-34 (MSKRNAVTTFFTNRVTKALGMTLALMMTCQSAMA). A compositionally biased stretch (polar residues) spans 238–255 (QKKTPTSSGQKASDSLVN). Residues 238–263 (QKKTPTSSGQKASDSLVNPSDKADKK) are disordered.

It belongs to the periplasmic pilus chaperone family.

The protein localises to the periplasm. In terms of biological role, involved in the biogenesis of the CS31A capsule-like antigen. The chain is Chaperone protein ClpE (clpE) from Escherichia coli.